Here is a 303-residue protein sequence, read N- to C-terminus: Sulfate adenylyltransferase subunit 2 (303 aa).

A disordered region spans residues 282 to 303; the sequence is SGRLIDHDESGSMEKKKREGYF.

It belongs to the PAPS reductase family. CysD subfamily. As to quaternary structure, heterodimer composed of CysD, the smaller subunit, and CysN.

It carries out the reaction sulfate + ATP + H(+) = adenosine 5'-phosphosulfate + diphosphate. It participates in sulfur metabolism; hydrogen sulfide biosynthesis; sulfite from sulfate: step 1/3. Its function is as follows. With CysN forms the ATP sulfurylase (ATPS) that catalyzes the adenylation of sulfate producing adenosine 5'-phosphosulfate (APS) and diphosphate, the first enzymatic step in sulfur assimilation pathway. APS synthesis involves the formation of a high-energy phosphoric-sulfuric acid anhydride bond driven by GTP hydrolysis by CysN coupled to ATP hydrolysis by CysD. This chain is Sulfate adenylyltransferase subunit 2, found in Maricaulis maris (strain MCS10) (Caulobacter maris).